We begin with the raw amino-acid sequence, 249 residues long: Anti-H(O) lectin 2 (249 aa).

N118 carries N-linked (GlcNAc...) asparagine glycosylation. Residues E130 and D132 each coordinate Mn(2+). Ca(2+)-binding residues include D132, Y134, N140, and D145. Residues D145 and H148 each coordinate Mn(2+). The N-linked (GlcNAc...) asparagine glycan is linked to N245.

Belongs to the leguminous lectin family.

Di-N-acetylchitobiose specific lectin. This chain is Anti-H(O) lectin 2, found in Ulex europaeus (Furze).